The sequence spans 96 residues: MNLRPLHDRVIVKRLDQETKTASGIVIPEAAAEKPDQGEILAVGPGKRDDKGAQIALDVKVGDRVLFGKYAGQTVKVDGNELLVMREEDIMAVVQK.

Belongs to the GroES chaperonin family. In terms of assembly, heptamer of 7 subunits arranged in a ring. Interacts with the chaperonin GroEL.

The protein localises to the cytoplasm. In terms of biological role, together with the chaperonin GroEL, plays an essential role in assisting protein folding. The GroEL-GroES system forms a nano-cage that allows encapsulation of the non-native substrate proteins and provides a physical environment optimized to promote and accelerate protein folding. GroES binds to the apical surface of the GroEL ring, thereby capping the opening of the GroEL channel. This Paraburkholderia phytofirmans (strain DSM 17436 / LMG 22146 / PsJN) (Burkholderia phytofirmans) protein is Co-chaperonin GroES.